The chain runs to 1591 residues: Rho guanine nucleotide exchange factor TIAM1 (1591 aa).

Residues 1 to 78 (MGNAESQHVE…AENGLEPFSQ (78 aa)) form a disordered region. Gly2 carries the N-myristoyl glycine lipid modification. The span at 7 to 19 (QHVEHEFYGEKHA) shows a compositional bias: basic and acidic residues. Basic residues predominate over residues 20–49 (SLGRKHTSRSLRLSHKTRRTRHASSGKVIH). Positions 53 to 67 (EVSTRSSSTPSIPQS) are enriched in low complexity. Position 231 is a phosphoserine (Ser231). Disordered regions lie at residues 298 to 379 (SEGA…GDAA) and 393 to 422 (MSTT…SPGQ). 2 stretches are compositionally biased toward polar residues: residues 300 to 313 (GATN…NSMQ) and 340 to 361 (TTDT…SPTT). Phosphoserine occurs at positions 356 and 358. Positions 367-377 (GSDSGSSSTGD) are enriched in low complexity. The span at 412 to 422 (QSSGTLSSPGQ) shows a compositional bias: polar residues. The region spanning 434–549 (VRKAGALAVK…TAIHSACATA (116 aa)) is the PH 1 domain. Ser695 bears the Phosphoserine mark. The RBD domain maps to 765-832 (TPSWFCLPNN…QPEEDIYELL (68 aa)). Tyr829 carries the post-translational modification Phosphotyrosine; by NTRK2. A PDZ domain is found at 845-908 (SIHIEKSDTA…NNRAADALNS (64 aa)). Residues 939 to 1034 (SPPHRVDGPA…TGPQLATMRQ (96 aa)) form a disordered region. Positions 958–975 (LTSNPGHSLCSEQGSSAE) are enriched in polar residues. Residues 977-990 (APEETEGPDLESSD) show a composition bias toward acidic residues. Residues 1014 to 1024 (PSDQSPSPQDS) are compositionally biased toward low complexity. Residues 1025 to 1034 (TGPQLATMRQ) are compositionally biased toward polar residues. A DH domain is found at 1040–1234 (KLRKVICELL…NKVASHINEM (195 aa)). The PH 2 domain occupies 1261-1397 (DLSMGDLLLH…KAVHSILRDK (137 aa)). A Phosphotyrosine modification is found at Tyr1323. Glycyl lysine isopeptide (Lys-Gly) (interchain with G-Cter in ubiquitin) cross-links involve residues Lys1404 and Lys1420. The segment at 1456 to 1482 (TIDSDAVSASSPEKESQQPPGGGDTDR) is disordered. A Phosphoserine modification is found at Ser1519.

Belongs to the TIAM family. As to quaternary structure, component of the Par polarity complex, composed of at least phosphorylated PRKCZ, PARD3 and TIAM1. Interacts with NTRK2; mediates the activation of RAC1 by BDNF. Interacts with MAPK8IP2 and CD44. Interacts with BAIAP2. Interacts with EPHA8; regulates clathrin-mediated endocytosis of EPHA8. Interacts with PARD3. Interacts (via PDZ domain) with CNTNAP4, SDC1 and SDC3 (via C-terminus). In terms of processing, ubiquitinated. Undergoes 'Lys-48' ubiquitination at Lys-1404 and Lys-1420 by a CUL3(KBTBD6/7) E3 ubiquitin ligase complex composed of CUL3, RBX1, KBTBD6 and KBTBD7. 'Lys-48' ubiquitination at Lys-1404 and Lys-1420 triggers proteasomal degradation. Ubiquitination at Lys-1404 and Lys-1420 by CUL3(KBTBD6/7) also requires the membrane-associated protein GABARAP and may therefore be spatially restricted within the cell. Found in virtually all analyzed tumor cell lines including B- and T-lymphomas, neuroblastomas, melanomas and carcinomas.

The protein resides in the cell junction. It localises to the cell membrane. Guanyl-nucleotide exchange factor that activates RHO-like proteins and connects extracellular signals to cytoskeletal activities. Activates RAC1, CDC42, and to a lesser extent RHOA and their downstream signaling to regulate processes like cell adhesion and cell migration. The protein is Rho guanine nucleotide exchange factor TIAM1 of Homo sapiens (Human).